The sequence spans 127 residues: 3-aminoacrylate deaminase RutC (127 aa).

It belongs to the RutC family.

It carries out the reaction (Z)-3-aminoacrylate + H2O + H(+) = 3-oxopropanoate + NH4(+). Involved in pyrimidine catabolism. Catalyzes the deamination of 3-aminoacrylate to malonic semialdehyde, a reaction that can also occur spontaneously. RutC may facilitate the reaction and modulate the metabolic fitness, rather than catalyzing essential functions. This chain is 3-aminoacrylate deaminase RutC, found in Pseudomonas savastanoi pv. phaseolicola (strain 1448A / Race 6) (Pseudomonas syringae pv. phaseolicola (strain 1448A / Race 6)).